The chain runs to 295 residues: GTPase Era (295 aa).

The region spanning 7–176 (KTISVCIIGR…IKSKAKVSPW (170 aa)) is the Era-type G domain. Residues 15 to 22 (GRPNSGKS) form a G1 region. 15–22 (GRPNSGKS) lines the GTP pocket. The G2 stretch occupies residues 41–45 (QTTRS). Residues 62-65 (DTPG) form a G3 region. GTP contacts are provided by residues 62 to 66 (DTPGI) and 124 to 127 (NKID). A G4 region spans residues 124–127 (NKID). Residues 152–154 (ISA) are G5. One can recognise a KH type-2 domain in the interval 204–281 (LQQELPYKLT…HLFLFVKVHA (78 aa)).

The protein belongs to the TRAFAC class TrmE-Era-EngA-EngB-Septin-like GTPase superfamily. Era GTPase family. In terms of assembly, monomer.

The protein localises to the cytoplasm. The protein resides in the cell inner membrane. In terms of biological role, an essential GTPase that binds both GDP and GTP, with rapid nucleotide exchange. Plays a role in 16S rRNA processing and 30S ribosomal subunit biogenesis and possibly also in cell cycle regulation and energy metabolism. The sequence is that of GTPase Era from Rickettsia typhi (strain ATCC VR-144 / Wilmington).